A 149-amino-acid chain; its full sequence is Putative pre-16S rRNA nuclease (149 aa).

The protein belongs to the YqgF nuclease family.

The protein resides in the cytoplasm. Its function is as follows. Could be a nuclease involved in processing of the 5'-end of pre-16S rRNA. In Burkholderia vietnamiensis (strain G4 / LMG 22486) (Burkholderia cepacia (strain R1808)), this protein is Putative pre-16S rRNA nuclease.